The primary structure comprises 266 residues: Mitochondrial genome maintenance protein MGM101 (266 aa).

Residues 1–23 constitute a mitochondrion transit peptide; it reads MLHSTKLVFRATPQALCFPVRSY. Composition is skewed to polar residues over residues 37–47 and 57–68; these read KTTSKLAPSIT and PSLQEPQSATST. The interval 37 to 68 is disordered; it reads KTTSKLAPSITTEDEVAEQDPSLQEPQSATST.

This sequence belongs to the MGM101 family. As to quaternary structure, forms homooligomers in vitro.

The protein localises to the mitochondrion matrix. It localises to the mitochondrion nucleoid. Plays a role in the replication of the mitochondrial genome and the maintenance of its telomeres. Able to catalyze strand annealing and D-loop formation. Binds a wide variety of DNA substrates. Exhibited the highest affinity for DNA molecules carrying 3' ssDNA overhangs (Y-form, 3' FLAP, 3' overhang) and for substrates with complex structures (X-O and Fork). Forms homogeneous ring-shaped structures at the ssDNA native telomeres ends. Oligomers seem to bind to the ssDNA as a filament until they reach the double-stranded region and induce the formation of bends and loops within the double-stranded part of the molecules. The sequence is that of Mitochondrial genome maintenance protein MGM101 from Candida parapsilosis (strain CDC 317 / ATCC MYA-4646) (Yeast).